Here is a 214-residue protein sequence, read N- to C-terminus: Probable chorismate pyruvate-lyase (214 aa).

Arg74, Leu112, and Glu173 together coordinate substrate. The disordered stretch occupies residues Ala183–Ser214. Residues Arg197–Ser214 show a composition bias toward basic and acidic residues.

This sequence belongs to the UbiC family.

It localises to the cytoplasm. The enzyme catalyses chorismate = 4-hydroxybenzoate + pyruvate. It participates in cofactor biosynthesis; ubiquinone biosynthesis. In terms of biological role, removes the pyruvyl group from chorismate, with concomitant aromatization of the ring, to provide 4-hydroxybenzoate (4HB) for the ubiquinone pathway. The protein is Probable chorismate pyruvate-lyase of Cupriavidus metallidurans (strain ATCC 43123 / DSM 2839 / NBRC 102507 / CH34) (Ralstonia metallidurans).